Reading from the N-terminus, the 436-residue chain is T-box transcription factor TBX6 (436 aa).

Residues 100–273 constitute a DNA-binding region (T-box); that stretch reads LWKEFSSVGT…ANPFAKGFRE (174 aa). Positions 271–284 are enriched in basic and acidic residues; it reads FRENGRNCKRERDA. Disordered regions lie at residues 271–339 and 360–379; these read FREN…APAP and PSHL…SGRS. The span at 325–339 shows a compositional bias: low complexity; that stretch reads EQAPAPGEATAAPAP.

As to quaternary structure, forms a dimeric complex with DNA (in vitro). In terms of tissue distribution, expressed in fetal tail bud, posterior spinal tissue, intervertebral disk and testis. Also expressed in adult testis, kidney, lung, muscle and thymus.

Its subcellular location is the nucleus. T-box transcription factor that plays an essential role in the determination of the fate of axial stem cells: neural vs mesodermal. Acts in part by down-regulating, a specific enhancer (N1) of SOX2, to inhibit neural development. Seems to play also an essential role in left/right axis determination and acts through effects on Notch signaling around the node as well as through an effect on the morphology and motility of the nodal cilia. The protein is T-box transcription factor TBX6 (TBX6) of Homo sapiens (Human).